Consider the following 316-residue polypeptide: MIKTELNYGDVYLVPKKTVVDSRKECDTSVQFGPRRFAMPVYPSNMKSVVSAETCELFAREGWFYTLHRFNVDAVAFTRYMQEQGLFASISVGVNDDTYEQLDALKAAGLSPEYMTLDIANAWCVKAERMIKHIKQHFPNTFLIGGNVATAEAARDLEAWGCDAIKAGIAGGRVCITKNKTGFHRPMVSTVRDCVAAVTIPVIADGGIVEHGDIAKALVCGATMVMAGSLFAGYDESAGDIVEIAGKHYKEYFGSASQFNKGAYVNVEGKKILVEYKGSMGKLLRELQEDLQSSVSYAGGTTLAALREVEMIQVYR.

Catalysis depends on Cys175, which acts as the Thioimidate intermediate. Val202–Val225 provides a ligand contact to NADP(+).

This sequence belongs to the IMPDH/GMPR family. GuaC type 2 subfamily.

It catalyses the reaction IMP + NH4(+) + NADP(+) = GMP + NADPH + 2 H(+). Functionally, catalyzes the irreversible NADPH-dependent deamination of GMP to IMP. It functions in the conversion of nucleobase, nucleoside and nucleotide derivatives of G to A nucleotides, and in maintaining the intracellular balance of A and G nucleotides. The sequence is that of GMP reductase from Chromobacterium violaceum (strain ATCC 12472 / DSM 30191 / JCM 1249 / CCUG 213 / NBRC 12614 / NCIMB 9131 / NCTC 9757 / MK).